Consider the following 148-residue polypeptide: Small ribosomal subunit protein uS13 (148 aa).

The protein belongs to the universal ribosomal protein uS13 family. In terms of assembly, part of the 30S ribosomal subunit. Forms a loose heterodimer with protein S19. Forms two bridges to the 50S subunit in the 70S ribosome.

Its function is as follows. Located at the top of the head of the 30S subunit, it contacts several helices of the 16S rRNA. In the 70S ribosome it contacts the 23S rRNA (bridge B1a) and protein L5 of the 50S subunit (bridge B1b), connecting the 2 subunits; these bridges are implicated in subunit movement. The polypeptide is Small ribosomal subunit protein uS13 (Pyrococcus abyssi (strain GE5 / Orsay)).